We begin with the raw amino-acid sequence, 837 residues long: Endo-1,4-beta-xylanase Z (837 aa).

Positions 1–28 are cleaved as a signal peptide; sequence MSRKLFSVLLVGLMLMTSLLVTISSTSA. The CBM6 domain occupies 299–420; the sequence is TRIEAEDYDG…PVNIDWFTFG (122 aa). The Dockerin domain maps to 424–492; it reads SSTGLGDLNG…ILRIITEFPG (69 aa). In terms of domain architecture, GH10 spans 512-833; that stretch reads TISGNALRDY…KPAYNAIKEA (322 aa). Glu645 (proton donor) is an active-site residue. The active-site Nucleophile is the Glu754. Residues Cys783 and Cys789 are joined by a disulfide bond.

Belongs to the glycosyl hydrolase 10 (cellulase F) family.

The catalysed reaction is Endohydrolysis of (1-&gt;4)-beta-D-xylosidic linkages in xylans.. This is Endo-1,4-beta-xylanase Z (xynZ) from Acetivibrio thermocellus (strain ATCC 27405 / DSM 1237 / JCM 9322 / NBRC 103400 / NCIMB 10682 / NRRL B-4536 / VPI 7372) (Clostridium thermocellum).